The chain runs to 350 residues: Holliday junction branch migration complex subunit RuvB (350 aa).

The tract at residues 1-184 (MSKTPERLVT…FGIPIRLEFY (184 aa)) is large ATPase domain (RuvB-L). ATP is bound by residues leucine 23, arginine 24, glycine 65, lysine 68, threonine 69, threonine 70, 131-133 (EDF), arginine 174, tyrosine 184, and arginine 221. A Mg(2+)-binding site is contributed by threonine 69. Residues 185-255 (TIEELERIVL…LADKALSLLD (71 aa)) are small ATPAse domain (RuvB-S). A head domain (RuvB-H) region spans residues 258–350 (PIGLDQMDRR…GLFPDQSEED (93 aa)). The DNA site is built by arginine 294, arginine 313, and arginine 318.

The protein belongs to the RuvB family. As to quaternary structure, homohexamer. Forms an RuvA(8)-RuvB(12)-Holliday junction (HJ) complex. HJ DNA is sandwiched between 2 RuvA tetramers; dsDNA enters through RuvA and exits via RuvB. An RuvB hexamer assembles on each DNA strand where it exits the tetramer. Each RuvB hexamer is contacted by two RuvA subunits (via domain III) on 2 adjacent RuvB subunits; this complex drives branch migration. In the full resolvosome a probable DNA-RuvA(4)-RuvB(12)-RuvC(2) complex forms which resolves the HJ.

The protein resides in the cytoplasm. It carries out the reaction ATP + H2O = ADP + phosphate + H(+). Its function is as follows. The RuvA-RuvB-RuvC complex processes Holliday junction (HJ) DNA during genetic recombination and DNA repair, while the RuvA-RuvB complex plays an important role in the rescue of blocked DNA replication forks via replication fork reversal (RFR). RuvA specifically binds to HJ cruciform DNA, conferring on it an open structure. The RuvB hexamer acts as an ATP-dependent pump, pulling dsDNA into and through the RuvAB complex. RuvB forms 2 homohexamers on either side of HJ DNA bound by 1 or 2 RuvA tetramers; 4 subunits per hexamer contact DNA at a time. Coordinated motions by a converter formed by DNA-disengaged RuvB subunits stimulates ATP hydrolysis and nucleotide exchange. Immobilization of the converter enables RuvB to convert the ATP-contained energy into a lever motion, pulling 2 nucleotides of DNA out of the RuvA tetramer per ATP hydrolyzed, thus driving DNA branch migration. The RuvB motors rotate together with the DNA substrate, which together with the progressing nucleotide cycle form the mechanistic basis for DNA recombination by continuous HJ branch migration. Branch migration allows RuvC to scan DNA until it finds its consensus sequence, where it cleaves and resolves cruciform DNA. The sequence is that of Holliday junction branch migration complex subunit RuvB from Beijerinckia indica subsp. indica (strain ATCC 9039 / DSM 1715 / NCIMB 8712).